A 615-amino-acid chain; its full sequence is Glutamine--fructose-6-phosphate aminotransferase [isomerizing] (615 aa).

Residue C2 is the Nucleophile; for GATase activity of the active site. In terms of domain architecture, Glutamine amidotransferase type-2 spans 2–220; that stretch reads CGIVGYVGPQ…QDQVVELRRD (219 aa). 2 consecutive SIS domains span residues 287 to 427 and 460 to 605; these read IPPG…VRGT and LARS…VDQP. K610 acts as the For Fru-6P isomerization activity in catalysis.

In terms of assembly, homodimer.

It localises to the cytoplasm. The enzyme catalyses D-fructose 6-phosphate + L-glutamine = D-glucosamine 6-phosphate + L-glutamate. In terms of biological role, catalyzes the first step in hexosamine metabolism, converting fructose-6P into glucosamine-6P using glutamine as a nitrogen source. The polypeptide is Glutamine--fructose-6-phosphate aminotransferase [isomerizing] (Streptomyces coelicolor (strain ATCC BAA-471 / A3(2) / M145)).